We begin with the raw amino-acid sequence, 271 residues long: 3-methyl-2-oxobutanoate hydroxymethyltransferase (271 aa).

The Mg(2+) site is built by Asp-51 and Asp-90. Residues 51-52 (DS), Asp-90, and Lys-118 each bind 3-methyl-2-oxobutanoate. Glu-120 serves as a coordination point for Mg(2+). The Proton acceptor role is filled by Glu-186.

The protein belongs to the PanB family. As to quaternary structure, homodecamer; pentamer of dimers. Requires Mg(2+) as cofactor.

It localises to the cytoplasm. The catalysed reaction is 3-methyl-2-oxobutanoate + (6R)-5,10-methylene-5,6,7,8-tetrahydrofolate + H2O = 2-dehydropantoate + (6S)-5,6,7,8-tetrahydrofolate. It participates in cofactor biosynthesis; (R)-pantothenate biosynthesis; (R)-pantoate from 3-methyl-2-oxobutanoate: step 1/2. Functionally, catalyzes the reversible reaction in which hydroxymethyl group from 5,10-methylenetetrahydrofolate is transferred onto alpha-ketoisovalerate to form ketopantoate. This is 3-methyl-2-oxobutanoate hydroxymethyltransferase from Stenotrophomonas maltophilia (strain R551-3).